The following is a 671-amino-acid chain: MSHYTGIILKLESDRAIVLTDGLDFMELKLKPGMQRGQHVIFDESDLYSAGLITRYKSIIMPFSAFAAAAAVFLVILFSLRFVSISQEYAYIDVDINPSIGLVIDKKEKVIDAKPLNNDAKPILDEAAPKDMPLYDALSKILDISKKNGYINSADNIVLFSASINSGRNNVSESDKGIQEIISTLKDVAKDAGVKFEIIPSTEEDRQKALDQNLSMGRYAIYVKAVEEGVNLNLEDARNLSVSEILGKVNIGKFAISDTPEDSGIMPAISVPAEPVPSVTPAYTAVPEKTEAQPVDIPKSSPTPASFTAHVPTPPKTPSIPHTSGPAIVHTPAADKTTPTFTGSSTPVPTNVVAIASTPVPVSTPKPVSTPAYSSTPTPESTPVPVSTPKPASTPTPASTPKPVSTPTHVSTPKPISTPTSTPRPASTPKPTSTPTPESTPKPTSTPAPVSTPTSTPIPTYTSTPASTPIPAYTSTPTSIPTLTPATSPAPTSSPTPIPSPAPTETDLLTKIELQAYNHIRTSETKELQPRIKLINTGNTPITLSEVKIRYYYTKDQVINEIYTCDWSNITSSKITGTVVQMSNPKPNADSYVEIGFTNSAGVLNPGEYVEIISRIGNSYALSLATPPYSEWNYMYDQNSDYSFNNSSSDFVVWDKITVYISGTLYWGIEP.

Topologically, residues 1–57 (MSHYTGIILKLESDRAIVLTDGLDFMELKLKPGMQRGQHVIFDESDLYSAGLITRYK) are cytoplasmic. Residues 4–51 (YTGIILKLESDRAIVLTDGLDFMELKLKPGMQRGQHVIFDESDLYSAG) form the RsgI N-terminal anti-sigma domain. Residues 58 to 78 (SIIMPFSAFAAAAAVFLVILF) form a helical membrane-spanning segment. The Extracellular portion of the chain corresponds to 79 to 671 (SLRFVSISQE…SGTLYWGIEP (593 aa)). 2 disordered regions span residues 290–323 (TEAQ…IPHT) and 359–505 (PVPV…APTE). A compositionally biased stretch (low complexity) spans 359 to 379 (PVPVSTPKPVSTPAYSSTPTP). Positions 380–400 (ESTPVPVSTPKPASTPTPAST) are enriched in pro residues. Residues 401–425 (PKPVSTPTHVSTPKPISTPTSTPRP) show a composition bias toward low complexity. The span at 426 to 446 (ASTPKPTSTPTPESTPKPTST) shows a compositional bias: pro residues. Over residues 447–491 (PAPVSTPTSTPIPTYTSTPASTPIPAYTSTPTSIPTLTPATSPAP) the composition is skewed to low complexity. Over residues 492–502 (TSSPTPIPSPA) the composition is skewed to pro residues. A CBM3 domain is found at 508 to 671 (LLTKIELQAY…SGTLYWGIEP (164 aa)). Ca(2+)-binding residues include Thr554, Asp556, Asp637, Ser640, and Asp641.

Interacts (via RsgI N-terminal anti-sigma domain) with SigI2.

The protein localises to the cell membrane. Its function is as follows. Anti-sigma factor for SigI2. Negatively regulates SigI2 activity through direct interaction. Binding of the polysaccharide substrate to the extracellular C-terminal sensing domain of RsgI2 may induce a conformational change in its N-terminal cytoplasmic region, leading to the release and activation of SigI2. The sequence is that of Anti-sigma-I factor RsgI2 from Acetivibrio thermocellus (strain ATCC 27405 / DSM 1237 / JCM 9322 / NBRC 103400 / NCIMB 10682 / NRRL B-4536 / VPI 7372) (Clostridium thermocellum).